A 47-amino-acid polypeptide reads, in one-letter code: MLQFLLGFTLGNVVGMYLAQNYDIPNLAKKLEEIKKDLDAKKKPPSA.

The chain crosses the membrane as a helical span at residues 7-23; that stretch reads GFTLGNVVGMYLAQNYD.

The protein belongs to the STMP1 family. As to quaternary structure, interacts with components of the ubiquinol-cytochrome c oxidoreductase (cytochrome b-c1 complex, complex III, CIII), such as UQCRC1/QCR1, UQCRC2/QCR2 and UQCR10/QCR9. Interacts with components of the cytochrome c oxidase (mitochondrial respiratory chain complex IV) complex, such as MT-CO2. As to expression, expressed in monocytes and dendritic cells.

The protein resides in the mitochondrion inner membrane. It localises to the mitochondrion outer membrane. The protein localises to the mitochondrion intermembrane space. Its function is as follows. Microprotein involved in mitochondrial respiratory chain complex III (ubiquinol-cytochrome c oxidoreductase) and complex IV (mitochondrial cytochrome c oxidase complex) assembly. Required for the formation of mitochondrial supercomplexes (SCs). Also required for the activation of the NLRP3 inflammasome. The chain is Short transmembrane mitochondrial protein 1 from Homo sapiens (Human).